A 564-amino-acid polypeptide reads, in one-letter code: Multidrug resistance protein 1 (564 aa).

At 1–115 the chain is on the cytoplasmic side; sequence MHYRFLRDSF…NPQNWPTLQK (115 aa). The disordered stretch occupies residues 60–101; sequence IDNQGEPNSSQSSSSNNTIVDNNNNNDNDVDGDKIVVTWDGD. Positions 67–86 are enriched in low complexity; sequence NSSQSSSSNNTIVDNNNNND. The chain crosses the membrane as a helical span at residues 116 to 136; that stretch reads AFFIFQISFLTTSVYMGSAVY. Residues 137-151 are Extracellular-facing; the sequence is TPGIEELMHDFGIGR. A helical membrane pass occupies residues 152-172; that stretch reads VVATLPLTLFVIGYGVGPLVF. At 173 to 183 the chain is on the cytoplasmic side; sequence SPMSENAIFGR. Residues 184–204 form a helical membrane-spanning segment; the sequence is TSIYIITLFLFVILQIPTALV. Residues 205 to 206 are Extracellular-facing; sequence NN. Residues 207–227 form a helical membrane-spanning segment; that stretch reads IAGLCILRFLGGFFASPCLAT. Over 228 to 242 the chain is Cytoplasmic; that stretch reads GGASVADVVKFWNLP. A helical transmembrane segment spans residues 243–263; it reads VGLAAWSLGAVCGPSFGPFFG. The Extracellular portion of the chain corresponds to 264 to 273; the sequence is SILTVKASWR. Residues 274 to 294 form a helical membrane-spanning segment; sequence WTFWFMCIISGFSFVMLCFTL. Residues 295–350 lie on the Cytoplasmic side of the membrane; that stretch reads PETFGKTLLYRKAKRLRAITGNDRITSEGEVENSKMTSHELIIDTLWRPLEITVME. The helical transmembrane segment at 351 to 371 threads the bilayer; sequence PVVLLINIYIAMVYSILYLFF. Residues 372–390 lie on the Extracellular side of the membrane; sequence EVFPIYFVGVKHFTLVELG. The chain crosses the membrane as a helical span at residues 391–411; that stretch reads TTYMSIVIGIVIAAFIYIPVI. Residues 412–428 are Cytoplasmic-facing; sequence RQKFTKPILRQEQVFPE. Residues 429-449 traverse the membrane as a helical segment; it reads VFIPIAIVGGILLTSGLFIFG. Residues 450-455 are Extracellular-facing; the sequence is WSANRT. N-linked (GlcNAc...) asparagine glycosylation occurs at N453. A helical membrane pass occupies residues 456-476; the sequence is THWVGPLFGAATTASGAFLIF. Topologically, residues 477–503 are cytoplasmic; the sequence is QTLFNFMGASFKPHYIASVFASNDLFR. A helical transmembrane segment spans residues 504–524; that stretch reads SVIASVFPLFGAPLFDNLATP. The Extracellular portion of the chain corresponds to 525–528; sequence EYPV. The chain crosses the membrane as a helical span at residues 529-549; that stretch reads AWGSSVLGFITLVMIAIPVLF. Residues 550 to 564 lie on the Cytoplasmic side of the membrane; that stretch reads YLNGPKLRARSKYAN.

It belongs to the major facilitator superfamily. CAR1 family.

It localises to the cell membrane. Its function is as follows. Plasma membrane multidrug efflux pump that confers resistance to numerous chemicals including azoles such as fluconazole, voriconazole, and benztriazoles, as well as to benomyl, cycloheximide, methotrexate, 4-nitroquinoline-N-oxide, sulfometuron methyl, cerulenin, and brefeldin A. This chain is Multidrug resistance protein 1, found in Candida albicans (strain SC5314 / ATCC MYA-2876) (Yeast).